Here is a 252-residue protein sequence, read N- to C-terminus: Ribosomal RNA small subunit methyltransferase J (252 aa).

Residues 104-105 (RD), 120-121 (ER), and D174 each bind S-adenosyl-L-methionine.

It belongs to the methyltransferase superfamily. RsmJ family.

The protein localises to the cytoplasm. It carries out the reaction guanosine(1516) in 16S rRNA + S-adenosyl-L-methionine = N(2)-methylguanosine(1516) in 16S rRNA + S-adenosyl-L-homocysteine + H(+). In terms of biological role, specifically methylates the guanosine in position 1516 of 16S rRNA. The protein is Ribosomal RNA small subunit methyltransferase J of Mannheimia succiniciproducens (strain KCTC 0769BP / MBEL55E).